Reading from the N-terminus, the 27-residue chain is Secretin (27 aa).

The residue at position 27 (V27) is a Valine amide.

The protein belongs to the glucagon family.

It is found in the secreted. In terms of biological role, hormone involved in different processes, such as regulation of the pH of the duodenal content, food intake and water homeostasis. Exerts its biological effects by binding to secretin receptor (SCTR), a G-protein coupled receptor expressed in the basolateral domain of several cells. Acts as a key gastrointestinal hormone by regulating the pH of the duodenal content. Secreted by S cells of the duodenum in the crypts of Lieberkuehn and regulates the pH of the duodenum by (1) inhibiting the secretion of gastric acid from the parietal cells of the stomach and (2) stimulating the production of bicarbonate (NaHCO(3)) from the ductal cells of the pancreas. Production of bicarbonate is essential to neutralize the pH and ensure no damage is done to the small intestine by the gastric acid. In addition to regulating the pH of the duodenal content, plays a central role in diet induced thermogenesis: acts as a non-sympathetic brown fat (BAT) activator mediating prandial thermogenesis, which consequentially induces satiation. Mechanistically, secretin released by the gut after a meal binds to secretin receptor (SCTR) in brown adipocytes, activating brown fat thermogenesis by stimulating lipolysis, which is sensed in the brain and promotes satiation. Also able to stimulate lipolysis in white adipocytes. Also plays an important role in cellular osmoregulation: released into the systemic circulation in response to hyperosmolality and acts at different levels in the hypothalamus, pituitary and kidney to regulate water homeostasis. Also plays a role in the central nervous system, possibly by acting as a neuropeptide hormone: required for hippocampal synaptic function and neural progenitor cells maintenance. This chain is Secretin, found in Canis lupus familiaris (Dog).